The primary structure comprises 131 residues: D-ribose pyranase (131 aa).

The Proton donor role is filled by H20. Residues D28, H98, and 120–122 (YAN) each bind substrate.

Belongs to the RbsD / FucU family. RbsD subfamily. Homodecamer.

It localises to the cytoplasm. It carries out the reaction beta-D-ribopyranose = beta-D-ribofuranose. It participates in carbohydrate metabolism; D-ribose degradation; D-ribose 5-phosphate from beta-D-ribopyranose: step 1/2. Functionally, catalyzes the interconversion of beta-pyran and beta-furan forms of D-ribose. In Bacillus thuringiensis (strain Al Hakam), this protein is D-ribose pyranase.